We begin with the raw amino-acid sequence, 1151 residues long: Chromosome partition protein Smc (1151 aa).

Position 32–39 (32–39 (PNGCGKSN)) interacts with ATP. 4 coiled-coil regions span residues 170–218 (ISGL…AARY), 342–379 (IGRL…ALGE), 407–508 (DSRT…REAQ), and 633–994 (LKQL…EGRE). Composition is skewed to basic and acidic residues over residues 421-438 (RARE…RAAE) and 465-480 (DEAR…EARA). Disordered regions lie at residues 421–483 (RARE…AQRS), 806–826 (SAEL…AAEA), and 862–889 (LRAA…AEAR). Basic and acidic residues predominate over residues 866–889 (QEAEREAERQAGESREARARAEAR).

This sequence belongs to the SMC family. Homodimer.

The protein localises to the cytoplasm. Its function is as follows. Required for chromosome condensation and partitioning. This chain is Chromosome partition protein Smc, found in Cereibacter sphaeroides (strain ATCC 17029 / ATH 2.4.9) (Rhodobacter sphaeroides).